A 145-amino-acid chain; its full sequence is Bacilliredoxin BH2759 (145 aa).

This sequence belongs to the bacilliredoxin family.

The sequence is that of Bacilliredoxin BH2759 from Halalkalibacterium halodurans (strain ATCC BAA-125 / DSM 18197 / FERM 7344 / JCM 9153 / C-125) (Bacillus halodurans).